The following is a 240-amino-acid chain: Uridylate kinase (240 aa).

K13–G16 contributes to the ATP binding site. Positions G21–G26 are involved in allosteric activation by GTP. G55 is a UMP binding site. 2 residues coordinate ATP: G56 and R60. UMP-binding positions include D75 and T136–T143. 4 residues coordinate ATP: T163, Q164, Y169, and D172.

The protein belongs to the UMP kinase family. As to quaternary structure, homohexamer.

The protein localises to the cytoplasm. The enzyme catalyses UMP + ATP = UDP + ADP. Its pathway is pyrimidine metabolism; CTP biosynthesis via de novo pathway; UDP from UMP (UMPK route): step 1/1. With respect to regulation, allosterically activated by GTP. Inhibited by UTP. In terms of biological role, catalyzes the reversible phosphorylation of UMP to UDP. This Rhizobium etli (strain ATCC 51251 / DSM 11541 / JCM 21823 / NBRC 15573 / CFN 42) protein is Uridylate kinase.